The primary structure comprises 183 residues: Phosphopantetheine adenylyltransferase (183 aa).

A substrate-binding site is contributed by threonine 13. ATP is bound by residues 13-14 (TF) and histidine 21. 3 residues coordinate substrate: lysine 45, leucine 81, and arginine 95. ATP is bound by residues 96-98 (GLR), glutamate 106, and 131-137 (HQFISSR).

This sequence belongs to the bacterial CoaD family. As to quaternary structure, homohexamer. Mg(2+) serves as cofactor.

The protein localises to the cytoplasm. The catalysed reaction is (R)-4'-phosphopantetheine + ATP + H(+) = 3'-dephospho-CoA + diphosphate. It functions in the pathway cofactor biosynthesis; coenzyme A biosynthesis; CoA from (R)-pantothenate: step 4/5. Its function is as follows. Reversibly transfers an adenylyl group from ATP to 4'-phosphopantetheine, yielding dephospho-CoA (dPCoA) and pyrophosphate. This chain is Phosphopantetheine adenylyltransferase, found in Rhodospirillum centenum (strain ATCC 51521 / SW).